A 290-amino-acid chain; its full sequence is ATP synthase gamma chain (290 aa).

Belongs to the ATPase gamma chain family. F-type ATPases have 2 components, CF(1) - the catalytic core - and CF(0) - the membrane proton channel. CF(1) has five subunits: alpha(3), beta(3), gamma(1), delta(1), epsilon(1). CF(0) has three main subunits: a, b and c.

Its subcellular location is the cell inner membrane. Functionally, produces ATP from ADP in the presence of a proton gradient across the membrane. The gamma chain is believed to be important in regulating ATPase activity and the flow of protons through the CF(0) complex. The polypeptide is ATP synthase gamma chain (Chelativorans sp. (strain BNC1)).